A 487-amino-acid chain; its full sequence is Serine/threonine-protein kinase 4 (487 aa).

Met1 carries the N-acetylmethionine modification. A Phosphothreonine modification is found at Thr3. Residues 30–281 (FDVLEKLGEG…ATQLLQHPFV (252 aa)) form the Protein kinase domain. ATP-binding positions include 36–44 (LGEGSYGSV) and Lys59. The active-site Proton acceptor is the Asp149. At Thr183 the chain carries Phosphothreonine; by autocatalysis. At Ser265 the chain carries Phosphoserine. A coiled-coil region spans residues 290 to 310 (LRDLINEAMDVKLKRQESQQR). A compositionally biased stretch (basic and acidic residues) spans 303–312 (KRQESQQREV). The interval 303 to 332 (KRQESQQREVDQDDEENSEEDEMDSGTMVR) is disordered. A compositionally biased stretch (acidic residues) spans 313 to 326 (DQDDEENSEEDEMD). The residue at position 320 (Ser320) is a Phosphoserine. A phosphothreonine mark is found at Thr340 and Thr367. Position 387 is a phosphothreonine; by PKB/AKT1 (Thr387). Phosphoserine occurs at positions 410 and 414. Position 433 is a phosphotyrosine (Tyr433). The region spanning 433 to 480 (YEFLKSWTVEDLQKRLLALDPMMEQEIEEIRQKYQSKRQPILDAIEAK) is the SARAH domain.

This sequence belongs to the protein kinase superfamily. STE Ser/Thr protein kinase family. STE20 subfamily. Homodimer; mediated via the coiled-coil region. Interacts with NORE1, which inhibits autoactivation. Interacts with and stabilizes SAV1. Interacts with RASSF1. Interacts with FOXO3. Interacts with RASSF2 (via SARAH domain). Interacts with AR, PKB/AKT1, TNNI3 and SIRT1. Interacts with DLG5 (via PDZ domain 3). Interacts with MARK3 and SCRIB in the presence of DLG5. Mg(2+) is required as a cofactor. In terms of processing, autophosphorylated on serine and threonine residues. Phosphorylation at Thr-387 by PKB/AKT1, leads to inhibition of its: kinase activity, nuclear translocation and autophosphorylation at Thr-183. It also diminishes its cleavage by caspases and its ability to phosphorylate FOXO3. Proteolytically cleaved by caspase-3 during apoptosis at Asp-326 and Asp-349 resulting in a 37 kDa or a 39 kDa subunit respectively. The 39 kDa subunit is further cleaved into the 37 kDa form. Proteolytic cleavage results in kinase activation and nuclear translocation of the truncated form (MST1/N). It is less likely that cleavage at Asp-349 is a prerequisite for activation as this site is not conserved in the murine ortholog.

The protein resides in the cytoplasm. Its subcellular location is the nucleus. It carries out the reaction L-seryl-[protein] + ATP = O-phospho-L-seryl-[protein] + ADP + H(+). It catalyses the reaction L-threonyl-[protein] + ATP = O-phospho-L-threonyl-[protein] + ADP + H(+). With respect to regulation, inhibited by the C-terminal non-catalytic region. Activated by caspase-cleavage. Full activation also requires homodimerization and autophosphorylation of Thr-183. Activated by RASSF1 which acts by preventing its dephosphorylation. Functionally, stress-activated, pro-apoptotic kinase which, following caspase-cleavage, enters the nucleus and induces chromatin condensation followed by internucleosomal DNA fragmentation. Key component of the Hippo signaling pathway which plays a pivotal role in organ size control and tumor suppression by restricting proliferation and promoting apoptosis. The core of this pathway is composed of a kinase cascade wherein STK3/MST2 and STK4/MST1, in complex with its regulatory protein SAV1, phosphorylates and activates LATS1/2 in complex with its regulatory protein MOB1, which in turn phosphorylates and inactivates YAP1 oncoprotein and WWTR1/TAZ. Phosphorylation of YAP1 by LATS2 inhibits its translocation into the nucleus to regulate cellular genes important for cell proliferation, cell death, and cell migration. STK3/MST2 and STK4/MST1 are required to repress proliferation of mature hepatocytes, to prevent activation of facultative adult liver stem cells (oval cells), and to inhibit tumor formation. Phosphorylates 'Ser-14' of histone H2B (H2BS14ph) during apoptosis. Phosphorylates FOXO3 upon oxidative stress, which results in its nuclear translocation and cell death initiation. Phosphorylates MOBKL1A, MOBKL1B and RASSF2. Phosphorylates TNNI3 (cardiac Tn-I) and alters its binding affinity to TNNC1 (cardiac Tn-C) and TNNT2 (cardiac Tn-T). Phosphorylates FOXO1 on 'Ser-212' and regulates its activation and stimulates transcription of PMAIP1 in a FOXO1-dependent manner. Phosphorylates SIRT1 and inhibits SIRT1-mediated p53/TP53 deacetylation, thereby promoting p53/TP53 dependent transcription and apoptosis upon DNA damage. Acts as an inhibitor of PKB/AKT1. Phosphorylates AR on 'Ser-650' and suppresses its activity by intersecting with PKB/AKT1 signaling and antagonizing formation of AR-chromatin complexes. This is Serine/threonine-protein kinase 4 (STK4) from Chlorocebus aethiops (Green monkey).